Here is a 513-residue protein sequence, read N- to C-terminus: Maturase K (513 aa).

Belongs to the intron maturase 2 family. MatK subfamily.

The protein resides in the plastid. It localises to the chloroplast. Functionally, usually encoded in the trnK tRNA gene intron. Probably assists in splicing its own and other chloroplast group II introns. This is Maturase K from Saccharum officinarum (Sugarcane).